Consider the following 525-residue polypeptide: Transmembrane protein 184C (525 aa).

7 consecutive transmembrane segments (helical) span residues 17-37 (LLVL…IWKF), 48-68 (SWFI…WGIL), 83-103 (IIRI…ALVY), 121-141 (VIYN…PNLI), 212-232 (YLVI…LLFY), 254-274 (VVFV…LGVI), and 287-307 (AVAT…AAIA). Disordered stretches follow at residues 358–394 (PKKK…PSPG) and 483–525 (LFPS…STDP). Positions 373 to 388 (SSLLSSSSQDLTSGSS) are enriched in low complexity. Residues 483–502 (LFPSTETSENSMIDTSESQQ) are compositionally biased toward polar residues. A compositionally biased stretch (low complexity) spans 503 to 525 (ESSDLCTESSDSSTESSDLSTDP).

Belongs to the TMEM184 family.

It localises to the membrane. Possible tumor suppressor which may play a role in cell growth. This Mus musculus (Mouse) protein is Transmembrane protein 184C (Tmem184c).